The primary structure comprises 88 residues: Small ribosomal subunit protein bS20 (88 aa).

The interval 1–36 is disordered; it reads MANTSSAKKATRKIARRTAVNKSRRTQMRGSVRTVE.

It belongs to the bacterial ribosomal protein bS20 family.

Functionally, binds directly to 16S ribosomal RNA. This Rhodopseudomonas palustris (strain HaA2) protein is Small ribosomal subunit protein bS20.